Reading from the N-terminus, the 237-residue chain is Ribosomal RNA small subunit methyltransferase G (237 aa).

S-adenosyl-L-methionine contacts are provided by residues Gly-75, Phe-80, 127–128 (AE), and Arg-146.

This sequence belongs to the methyltransferase superfamily. RNA methyltransferase RsmG family.

It is found in the cytoplasm. Functionally, specifically methylates the N7 position of a guanine in 16S rRNA. This Synechococcus sp. (strain RCC307) protein is Ribosomal RNA small subunit methyltransferase G.